Reading from the N-terminus, the 644-residue chain is Protein ETHYLENE-INSENSITIVE 3-like 1b (644 aa).

Disordered stretches follow at residues 47–75 and 97–131; these read QCVM…DDDV and ELQL…KMSR. Over residues 66 to 75 the composition is skewed to acidic residues; that stretch reads AGEDDSDDDV.

It belongs to the EIN3 family. Highly expressed in roots. Expressed at low levels in leaves and panicles.

The protein localises to the nucleus. Transcription factor acting as a positive regulator in the ethylene response pathway. Involved in wound signaling by binding specifically to the DNA sequence 5'-ATGTACCT-3' found in the promoter of some wound-inducible genes. Binds directly to the DNA sequence 5'-TGTTACAAATACC-3' in the promoter of the GA20OX2 gene to activate its expression at the transcriptional level during ethylene signaling. The polypeptide is Protein ETHYLENE-INSENSITIVE 3-like 1b (Oryza sativa subsp. japonica (Rice)).